Here is a 431-residue protein sequence, read N- to C-terminus: MISANDKSTDTNVDSTQAEQKIAEKQNKLLSGIIERATKSSLGRKKLNPSVVESAVAKKMEEIHKNPTKLRLVVLGGGSFGTAMANLAARNGCDTTLWVRNKRTVKAMAKSQMNKKYLPGYKLDDRLKYSHELQAAVKDTDIIFIAVPGLAFRETLKSIAPFISGQSIVSLTKGMEKDTFSLMSDIIKDELPEVNFGVMSGPNLAIEIMKNMPSATVIASESEPLRHAVQAALHSAFFRVFASDDIRGVELGGALKNIYAIAMGMAAAYEVGENTKAMILTRGLAEMSRFGVHAGANPLTFLGLSGVGDLYATCSSELSRNYRIGNMLGRGMTIDAAVKKLGQTAEGVNTIQQVHEKATKEGIYMPITHALYAVIYEDKAALGVALHLMEAGFRSDVEFVMEHDHSNASLTAQMQTANSQSKEDKSKQGNK.

Residues S79, F80, R100, and K173 each coordinate NADPH. Sn-glycerol 3-phosphate is bound by residues K173 and G201. Residue A205 coordinates NADPH. Sn-glycerol 3-phosphate-binding residues include K256, D309, S319, R320, and N321. K256 functions as the Proton acceptor in the catalytic mechanism. Residue R320 coordinates NADPH. E346 lines the NADPH pocket.

Belongs to the NAD-dependent glycerol-3-phosphate dehydrogenase family.

It is found in the cytoplasm. The catalysed reaction is sn-glycerol 3-phosphate + NAD(+) = dihydroxyacetone phosphate + NADH + H(+). It catalyses the reaction sn-glycerol 3-phosphate + NADP(+) = dihydroxyacetone phosphate + NADPH + H(+). It functions in the pathway membrane lipid metabolism; glycerophospholipid metabolism. In terms of biological role, catalyzes the reduction of the glycolytic intermediate dihydroxyacetone phosphate (DHAP) to sn-glycerol 3-phosphate (G3P), the key precursor for phospholipid synthesis. The sequence is that of Glycerol-3-phosphate dehydrogenase [NAD(P)+] from Psychrobacter cryohalolentis (strain ATCC BAA-1226 / DSM 17306 / VKM B-2378 / K5).